The following is a 405-amino-acid chain: Argininosuccinate synthase (405 aa).

Residues 11–19 (AYSGGLDTS) and alanine 38 contribute to the ATP site. L-citrulline contacts are provided by tyrosine 91 and serine 96. Glycine 121 is an ATP binding site. L-aspartate contacts are provided by threonine 123, asparagine 127, and aspartate 128. Residue asparagine 127 coordinates L-citrulline. Arginine 131, serine 181, serine 190, glutamate 266, and tyrosine 278 together coordinate L-citrulline.

This sequence belongs to the argininosuccinate synthase family. Type 1 subfamily. In terms of assembly, homotetramer.

The protein resides in the cytoplasm. It carries out the reaction L-citrulline + L-aspartate + ATP = 2-(N(omega)-L-arginino)succinate + AMP + diphosphate + H(+). Its pathway is amino-acid biosynthesis; L-arginine biosynthesis; L-arginine from L-ornithine and carbamoyl phosphate: step 2/3. In Nitratiruptor sp. (strain SB155-2), this protein is Argininosuccinate synthase.